A 497-amino-acid polypeptide reads, in one-letter code: Serine hydroxymethyltransferase (497 aa).

(6S)-5,6,7,8-tetrahydrofolate contacts are provided by residues L176 and 180-182 (GHL). K289 bears the N6-(pyridoxal phosphate)lysine mark.

It belongs to the SHMT family. Homodimer. Pyridoxal 5'-phosphate serves as cofactor.

Its subcellular location is the cytoplasm. The enzyme catalyses (6R)-5,10-methylene-5,6,7,8-tetrahydrofolate + glycine + H2O = (6S)-5,6,7,8-tetrahydrofolate + L-serine. Its pathway is one-carbon metabolism; tetrahydrofolate interconversion. It functions in the pathway amino-acid biosynthesis; glycine biosynthesis; glycine from L-serine: step 1/1. Catalyzes the reversible interconversion of serine and glycine with tetrahydrofolate (THF) serving as the one-carbon carrier. This reaction serves as the major source of one-carbon groups required for the biosynthesis of purines, thymidylate, methionine, and other important biomolecules. Also exhibits THF-independent aldolase activity toward beta-hydroxyamino acids, producing glycine and aldehydes, via a retro-aldol mechanism. The protein is Serine hydroxymethyltransferase of Chlamydia trachomatis serovar L2b (strain UCH-1/proctitis).